The sequence spans 177 residues: Peptide methionine sulfoxide reductase MsrA (177 aa).

Cys11 is an active-site residue.

Belongs to the MsrA Met sulfoxide reductase family.

It catalyses the reaction L-methionyl-[protein] + [thioredoxin]-disulfide + H2O = L-methionyl-(S)-S-oxide-[protein] + [thioredoxin]-dithiol. The enzyme catalyses [thioredoxin]-disulfide + L-methionine + H2O = L-methionine (S)-S-oxide + [thioredoxin]-dithiol. Functionally, has an important function as a repair enzyme for proteins that have been inactivated by oxidation. Catalyzes the reversible oxidation-reduction of methionine sulfoxide in proteins to methionine. The polypeptide is Peptide methionine sulfoxide reductase MsrA (Picrophilus torridus (strain ATCC 700027 / DSM 9790 / JCM 10055 / NBRC 100828 / KAW 2/3)).